Consider the following 115-residue polypeptide: NADH-ubiquinone oxidoreductase chain 3 (115 aa).

A run of 3 helical transmembrane segments spans residues 3–23, 55–75, and 86–106; these read LMIT…IAFW, FFLV…LLPL, and LTLL…AYEW.

This sequence belongs to the complex I subunit 3 family. As to quaternary structure, core subunit of respiratory chain NADH dehydrogenase (Complex I) which is composed of 45 different subunits. Interacts with TMEM186. Interacts with TMEM242.

The protein resides in the mitochondrion inner membrane. It carries out the reaction a ubiquinone + NADH + 5 H(+)(in) = a ubiquinol + NAD(+) + 4 H(+)(out). In terms of biological role, core subunit of the mitochondrial membrane respiratory chain NADH dehydrogenase (Complex I) which catalyzes electron transfer from NADH through the respiratory chain, using ubiquinone as an electron acceptor. Essential for the catalytic activity of complex I. The polypeptide is NADH-ubiquinone oxidoreductase chain 3 (Loxodonta africana (African elephant)).